Consider the following 642-residue polypeptide: Threonine--tRNA ligase (642 aa).

A TGS domain is found at 1-61 (MPVITLPDGS…ETDAELSIIT (61 aa)). Residues 243 to 534 (DHRKIGKQLD…LIEEYAGRFP (292 aa)) form a catalytic region. Zn(2+)-binding residues include Cys-334, His-385, and His-511.

Belongs to the class-II aminoacyl-tRNA synthetase family. As to quaternary structure, homodimer. Zn(2+) serves as cofactor.

Its subcellular location is the cytoplasm. It catalyses the reaction tRNA(Thr) + L-threonine + ATP = L-threonyl-tRNA(Thr) + AMP + diphosphate + H(+). Functionally, catalyzes the attachment of threonine to tRNA(Thr) in a two-step reaction: L-threonine is first activated by ATP to form Thr-AMP and then transferred to the acceptor end of tRNA(Thr). Also edits incorrectly charged L-seryl-tRNA(Thr). The chain is Threonine--tRNA ligase from Shewanella putrefaciens (strain CN-32 / ATCC BAA-453).